The primary structure comprises 353 residues: UPF0283 membrane protein YcjF (353 aa).

Positions 1–19 (MSEPLKPRIDFAEPLKEEP) are enriched in basic and acidic residues. The interval 1–35 (MSEPLKPRIDFAEPLKEEPTSAFKAQQTFSEAESR) is disordered. 3 helical membrane passes run 70 to 90 (MVMG…VQWT), 100 to 120 (VALG…GSVV), and 213 to 233 (ESTL…FIAW).

The protein belongs to the UPF0283 family.

Its subcellular location is the cell inner membrane. This chain is UPF0283 membrane protein YcjF, found in Salmonella dublin (strain CT_02021853).